Consider the following 385-residue polypeptide: Polyketide synthase 1 (385 aa).

Residue cysteine 157 is part of the active site.

Belongs to the thiolase-like superfamily. Chalcone/stilbene synthases family. Expressed in glandular trichomes.

The protein localises to the cytoplasm. In terms of biological role, polyketide synthase responsible for the biosynthesis of secondary metabolites. This chain is Polyketide synthase 1 (PKSG1), found in Cannabis sativa (Hemp).